A 525-amino-acid polypeptide reads, in one-letter code: MSDSFSARLEAAVSALPARFPGPGGAVAVLKDGEVLVRHGWGYANVERRIPFTPSTLFRMCSITKQFTCGTLLDLYDDPSELDADVDARLPQLDEPSPGMLHLAHNQSGLRDYWAVAMLHGAPIEGYFGDREARRVIDGTRTLQFQPGTSYSYVNQNFRLISDILQDRTGRSFAELLQTSIFNPVGMERAILAAETRAMPDGTVGYEGSVESGFRPAINNIWWTGDAGLGASLDDMIAWERFIDETRDAPDSLYRRLTVPVTFSDGQPAPYGFGLQRTKMFGRDVTMHGGALRGWRSHRLHVASERLSVVVMFNHMSAAQVASAQILAAALGVPYEPERSTQQPTALYGTYLERETGLSARIEPAPGGAKLRYLMVPELLEGISATRAEAGSVVVKAQETAEGAEAVMERPGENRTSILARCDETPGEDIAELAGVYRCEELDEAEVTIELAGGVVYGGFSGILGDGRMEMLQRLAKDVWVLPCPRALDHTAPGDWTLAFERQGGSVTAVRVGCWLARDLMYQRV.

S62 (nucleophile) is an active-site residue. K65 serves as the catalytic Proton donor/acceptor. The important for specificity stretch occupies residues 485-495; the sequence is PRALDHTAPGD. A substrate-binding site is contributed by D489.

This sequence belongs to the peptidase S12 family. In terms of assembly, homodimer.

It catalyses the reaction Release of an N-terminal D-amino acid from a peptide, Xaa-|-Yaa-, in which Xaa is preferably D-Ala, D-Ser or D-Thr. D-amino acid amides and methyl esters also are hydrolyzed, as is glycine amide.. With respect to regulation, inhibited by beta-lactam compounds such as 6-aminopenicillic acid, 7-aminocephalosporanic acid, benzylpenicillin and ampicillin. Inhibited by p-chloromercuribenzoate. Hydrolyzes N-terminal residues in D-amino acid-containing peptides. The chain is D-aminopeptidase from Gluconobacter oxydans (strain 621H) (Gluconobacter suboxydans).